A 658-amino-acid chain; its full sequence is Trimethylamine N-oxide transport system permease protein TmoV (658 aa).

Helical transmembrane passes span 20 to 40, 103 to 123, 127 to 147, 153 to 173, 185 to 205, 212 to 232, 273 to 293, 300 to 320, 349 to 369, 420 to 440, 447 to 467, 469 to 489, 517 to 537, 585 to 605, and 627 to 647; these read LGLA…AGLL, IGPI…YYLG, MALL…WDIA, VLVV…ISAW, VLAV…VIFF, GAVA…TLGL, VIML…PGLG, MGSF…LLAV, FLLM…VVPI, FMLS…ALLV, VLAA…RSVI, LYSV…IGVV, IPAI…ILIF, AVGF…AAFI, and FVLG…IMKW. Positions 147–326 constitute an ABC transmembrane type-1 1 domain; that stretch reads AMQTMSVLVV…LLAVTLDRMS (180 aa). Positions 465-644 constitute an ABC transmembrane type-1 2 domain; sequence SVITLYSVLA…LMALTFDMVI (180 aa).

It belongs to the binding-protein-dependent transport system permease family. In terms of assembly, the complex is probably composed of two ATP-binding proteins (TmoW), two transmembrane proteins (TmoV) and a solute-binding protein (TmoX).

The protein resides in the cell inner membrane. Part of the ABC transporter complex TmoXWV involved in trimethylamine N-oxide (TMAO) import. Responsible for the translocation of the substrate across the membrane. Is specific for TMAO and essential for TMAO metabolism. The sequence is that of Trimethylamine N-oxide transport system permease protein TmoV from Ruegeria pomeroyi (strain ATCC 700808 / DSM 15171 / DSS-3) (Silicibacter pomeroyi).